The primary structure comprises 188 residues: Transmembrane protein 160 (188 aa).

A mitochondrion-targeting transit peptide spans 1–96 (MGGGWWWARA…ISFMQSDMGR (96 aa)). Residues 25–52 (PPRPRSGGARGSFAPGHGPRAGASPPPV) are disordered. Residues 29-38 (RSGGARGSFA) show a composition bias toward low complexity. S48 carries the phosphoserine modification. The next 2 membrane-spanning stretches (helical) occupy residues 102 to 122 (FFLL…VGLA) and 135 to 155 (AAAG…AVGL).

The protein belongs to the TMEM160 family.

It is found in the mitochondrion inner membrane. This Bos taurus (Bovine) protein is Transmembrane protein 160.